Reading from the N-terminus, the 429-residue chain is Histidine--tRNA ligase (429 aa).

The protein belongs to the class-II aminoacyl-tRNA synthetase family. As to quaternary structure, homodimer.

It is found in the cytoplasm. The catalysed reaction is tRNA(His) + L-histidine + ATP = L-histidyl-tRNA(His) + AMP + diphosphate + H(+). The sequence is that of Histidine--tRNA ligase from Acidovorax ebreus (strain TPSY) (Diaphorobacter sp. (strain TPSY)).